Reading from the N-terminus, the 172-residue chain is Shikimate kinase (172 aa).

An ATP-binding site is contributed by Gly14–Thr19. Mg(2+) is bound at residue Ser18. Substrate contacts are provided by Asp36, Arg60, and Gly82. Arg120 contacts ATP. Arg139 provides a ligand contact to substrate. Gln156 is a binding site for ATP.

It belongs to the shikimate kinase family. As to quaternary structure, monomer. Mg(2+) serves as cofactor.

It localises to the cytoplasm. It carries out the reaction shikimate + ATP = 3-phosphoshikimate + ADP + H(+). It participates in metabolic intermediate biosynthesis; chorismate biosynthesis; chorismate from D-erythrose 4-phosphate and phosphoenolpyruvate: step 5/7. Functionally, catalyzes the specific phosphorylation of the 3-hydroxyl group of shikimic acid using ATP as a cosubstrate. This chain is Shikimate kinase, found in Vibrio vulnificus (strain CMCP6).